The following is a 177-amino-acid chain: Large ribosomal subunit protein uL22 (177 aa).

The tract at residues 118 to 177 (VESRPSREGRRGGAGESAGGARARRAQGSKAAAAKKAPASSSKKAATTTEASEEAKGGSQ) is disordered. The segment covering 121-130 (RPSREGRRGG) has biased composition (basic and acidic residues). A compositionally biased stretch (low complexity) spans 145-167 (GSKAAAAKKAPASSSKKAATTTE).

This sequence belongs to the universal ribosomal protein uL22 family. Part of the 50S ribosomal subunit.

In terms of biological role, this protein binds specifically to 23S rRNA; its binding is stimulated by other ribosomal proteins, e.g. L4, L17, and L20. It is important during the early stages of 50S assembly. It makes multiple contacts with different domains of the 23S rRNA in the assembled 50S subunit and ribosome. The globular domain of the protein is located near the polypeptide exit tunnel on the outside of the subunit, while an extended beta-hairpin is found that lines the wall of the exit tunnel in the center of the 70S ribosome. This Mycobacterium sp. (strain KMS) protein is Large ribosomal subunit protein uL22.